Here is a 238-residue protein sequence, read N- to C-terminus: Ribonuclease PH (238 aa).

Phosphate contacts are provided by residues arginine 86 and 124–126 (GTR).

Belongs to the RNase PH family. In terms of assembly, homohexameric ring arranged as a trimer of dimers.

The enzyme catalyses tRNA(n+1) + phosphate = tRNA(n) + a ribonucleoside 5'-diphosphate. Functionally, phosphorolytic 3'-5' exoribonuclease that plays an important role in tRNA 3'-end maturation. Removes nucleotide residues following the 3'-CCA terminus of tRNAs; can also add nucleotides to the ends of RNA molecules by using nucleoside diphosphates as substrates, but this may not be physiologically important. Probably plays a role in initiation of 16S rRNA degradation (leading to ribosome degradation) during starvation. This is Ribonuclease PH from Salmonella agona (strain SL483).